Here is a 412-residue protein sequence, read N- to C-terminus: CCA-adding enzyme (412 aa).

Residues S41 and K44 each coordinate ATP. Positions 41 and 44 each coordinate CTP. Mg(2+) contacts are provided by D53, D55, and D106. Residues H129, K149, and Y158 each contribute to the ATP site. CTP contacts are provided by H129, K149, and Y158.

Belongs to the tRNA nucleotidyltransferase/poly(A) polymerase family. Archaeal CCA-adding enzyme subfamily. Homodimer. Forms a tetramer upon binding two tRNAs. However, tRNA-induced tetramer formation is not required for CCA addition. Requires Mg(2+) as cofactor.

It catalyses the reaction a tRNA precursor + 2 CTP + ATP = a tRNA with a 3' CCA end + 3 diphosphate. It carries out the reaction a tRNA with a 3' CCA end + 2 CTP + ATP = a tRNA with a 3' CCACCA end + 3 diphosphate. Catalyzes the addition and repair of the essential 3'-terminal CCA sequence in tRNAs without using a nucleic acid template. Adds these three nucleotides in the order of C, C, and A to the tRNA nucleotide-73, using CTP and ATP as substrates and producing inorganic pyrophosphate. tRNA 3'-terminal CCA addition is required both for tRNA processing and repair. Also involved in tRNA surveillance by mediating tandem CCA addition to generate a CCACCA at the 3' terminus of unstable tRNAs. While stable tRNAs receive only 3'-terminal CCA, unstable tRNAs are marked with CCACCA and rapidly degraded. The structural flexibility of RNA controls the choice between CCA versus CCACCA addition: following the first CCA addition cycle, nucleotide-binding to the active site triggers a clockwise screw motion, producing torque on the RNA. This ejects stable RNAs, whereas unstable RNAs are refolded while bound to the enzyme and subjected to a second CCA catalytic cycle. The protein is CCA-adding enzyme of Saccharolobus shibatae (strain ATCC 51178 / DSM 5389 / JCM 8931 / NBRC 15437 / B12) (Sulfolobus shibatae).